The chain runs to 448 residues: Proline iminopeptidase aneH (448 aa).

Residues 64 to 191 (PWMLYLQGGP…VEVFIGGGPC (128 aa)) form the AB hydrolase-1 domain. The Nucleophile role is filled by serine 164. The active site involves aspartate 397. Histidine 425 (proton donor) is an active-site residue.

Belongs to the peptidase S33 family. Homooligomer.

It is found in the cytoplasm. The catalysed reaction is Release of N-terminal proline from a peptide.. It participates in secondary metabolite biosynthesis. Its function is as follows. Proline iminopeptidase; part of the gene cluster that mediates the biosynthesis of aculenes, a unique type of norsesquiterpenes that contain a nordaucane skeleton linked to an L-proline moiety and are of mixed biosynthetic origin. The pathway begins with the synthesis of dauca-4,7-diene by the terpene cyclase aneC using farnesyl pyrophosphate (FPP) as substrate. The cytochrome P450 monooxygenase aneF then performs the initial oxidation at C-12 of dauca-4,7-diene to yield asperaculane D. Asperaculane D is substrate of the cytochrome P450 monooxygenase aneD for C-10 hydroxylation to yield asperaculane E. The cytochrome P450 monooxygenase aneG then converts asperaculane E into aculene D via C-2 oxidation. The monomodular nonribosomal peptide synthtase aneB adenylates L-proline and the thiohydrolase aneE transfers this activated L-proline derivative to aculenes D and C to produce respectively aculenes B and A. The dioxygenase aneA converts aculene D into aculene C, and aculene B into aculene A by introducing the 5,6-alkene moiety. Asperculanes A, B, C and F, as well as 14-prolyl asperculane C, might be shunt products of the pathway. The protein is Proline iminopeptidase aneH of Aspergillus aculeatus (strain ATCC 16872 / CBS 172.66 / WB 5094).